The primary structure comprises 309 residues: Syndecan-1 (309 aa).

Residues 1 to 22 (MRRAALWLWLCALALRLQPVLP) form the signal peptide. Residues 24–253 (IMAVNVPPED…GLLDRKEVLG (230 aa)) lie on the Extracellular side of the membrane. Disordered regions lie at residues 28–57 (NVPPEDQDGSGDDSDNFSGSGTGALPDITL) and 142–185 (ARAT…GGTS). Over residues 32 to 42 (EDQDGSGDDSD) the composition is skewed to acidic residues. Serine 37 is a glycosylation site (O-linked (Xyl...) (chondroitin sulfate) serine). N-linked (GlcNAc...) asparagine glycosylation occurs at asparagine 43. O-linked (Xyl...) (heparan sulfate) serine glycosylation is found at serine 45 and serine 47. The span at 142–151 (ARATTAQAPV) shows a compositional bias: polar residues. O-linked (Xyl...) (chondroitin sulfate) serine glycans are attached at residues serine 205 and serine 215. Residues 254-274 (GVIAGGLVGLIFAVCLVGFML) traverse the membrane as a helical segment. At 275–309 (YRMKKKDEGSYSLEEPKQANGGAYQKPTKQEEFYA) the chain is on the cytoplasmic side. The segment at 283-309 (GSYSLEEPKQANGGAYQKPTKQEEFYA) is disordered. A Phosphoserine modification is found at serine 284.

Belongs to the syndecan proteoglycan family. As to quaternary structure, interacts with CDCP1. Interacts (via C-terminus) with TIAM1 (via PDZ domain). Interacts with MDK. Post-translationally, shedding is enhanced by a number of factors such as heparanase, thrombin or EGF. Also by stress and wound healing. PMA-mediated shedding is inhibited by TIMP3.

It is found in the membrane. Its subcellular location is the secreted. It localises to the extracellular exosome. Functionally, cell surface proteoglycan that contains both heparan sulfate and chondroitin sulfate and that links the cytoskeleton to the interstitial matrix. Regulates exosome biogenesis in concert with SDCBP and PDCD6IP. Able to induce its own expression in dental mesenchymal cells and also in the neighboring dental epithelial cells via an MSX1-mediated pathway. The polypeptide is Syndecan-1 (Cricetulus griseus (Chinese hamster)).